The following is a 405-amino-acid chain: uncharacterized protein (405 aa).

This is an uncharacterized protein from Schizosaccharomyces pombe (strain 972 / ATCC 24843) (Fission yeast).